A 199-amino-acid polypeptide reads, in one-letter code: V-type ATP synthase subunit E (199 aa).

The protein belongs to the V-ATPase E subunit family.

In terms of biological role, produces ATP from ADP in the presence of a proton gradient across the membrane. This Borreliella burgdorferi (strain ATCC 35210 / DSM 4680 / CIP 102532 / B31) (Borrelia burgdorferi) protein is V-type ATP synthase subunit E (atpE).